Here is a 135-residue protein sequence, read N- to C-terminus: MMNTKKLIKMFRKWQQRAALHRKRISFQRPSTRSTTVEKGCFVVYTADNTRFAFPISYLSNSVFQEILEISEEEFGLPTGGPITLPFDSVFLEYLIKLIKRRMDGDTEKALLMSISSARCSLQKQEQSTQQLLVF.

Belongs to the ARG7 family.

Its subcellular location is the cell membrane. Functionally, may promote auxin-stimulated organ elongation, such as hypocotyls, stamen filaments and petals. In Arabidopsis thaliana (Mouse-ear cress), this protein is Auxin-responsive protein SAUR66.